Reading from the N-terminus, the 537-residue chain is Immunoglobulin-like domain-containing receptor 1 (537 aa).

The first 22 residues, 1–22 (MGCGLLAAGLLLFTWLPAGCLS), serve as a signal peptide directing secretion. The Ig-like V-type domain occupies 23–161 (LLVTVQHTER…TSGDPDKEVK (139 aa)). The Extracellular segment spans residues 23 to 166 (LLVTVQHTER…DKEVKLIVLH (144 aa)). Cys-44 and Cys-144 are joined by a disulfide. The chain crosses the membrane as a helical span at residues 167-187 (WLTVIFIILGALLLLLLIGVC). The Cytoplasmic portion of the chain corresponds to 188 to 537 (WCQCCPQYCC…SSHSGRSVVI (350 aa)). Residues 333-537 (PPLIRDPPSS…SSHSGRSVVI (205 aa)) are disordered. The span at 341-357 (SSRTSNPSHQQRLNAVS) shows a compositional bias: polar residues. Basic and acidic residues-rich tracts occupy residues 359–380 (RHCD…RELQ) and 434–444 (RRPEPREGAQR). The span at 480-490 (QRRHHHRRRRS) shows a compositional bias: basic residues. Phosphoserine is present on residues Ser-490 and Ser-492. Residues 518-530 (GNVERRLERESSH) are compositionally biased toward basic and acidic residues.

The protein belongs to the immunoglobulin superfamily. LISCH7 family. As to quaternary structure, homooligomer. Interacts with MARVELD2 and OCLN; the interaction is required to recruit MARVELD2 to tricellular contacts. Interacts (via C-terminus) with TRA2A, TRA2B and SRSF1. Interacts with PLSCR1. Expressed in the vestibule and in hair cells and supporting cells of the cochlea. Expressed in epithelial tissues. Highly expressed in colon but also detected in small intestine, bladder and lung. In colon, expressed in the upper portion of the crypts (at protein level). Expressed in CCK secretory cells of the proximal small intestine (at protein level). Expressed in the organ of Corti, stria vascularis, utricle and saccule of the inner ear.

The protein resides in the cell membrane. The protein localises to the cell junction. It localises to the tight junction. It is found in the nucleus. Its subcellular location is the cytoplasm. In terms of biological role, maintains epithelial barrier function by recruiting MARVELD2/tricellulin to tricellular tight junctions (tTJs). Crucial for normal hearing by maintaining the structural and functional integrity of tTJs, which are critical for the survival of auditory neurosensory HCs. Mediates fatty acids and lipoproteins-stimulated CCK/cholecystokinin secretion in the small intestine. In the inner ear, may regulate alternative pre-mRNA splicing via binding to TRA2A, TRA2B and SRSF1. This chain is Immunoglobulin-like domain-containing receptor 1, found in Mus musculus (Mouse).